We begin with the raw amino-acid sequence, 430 residues long: 3-phosphoshikimate 1-carboxyvinyltransferase (430 aa).

Residues Lys23, Ser24, and Arg28 each coordinate 3-phosphoshikimate. Lys23 contributes to the phosphoenolpyruvate binding site. Gly95 and Arg123 together coordinate phosphoenolpyruvate. Residues Ser169, Gln171, Asp315, and Lys342 each coordinate 3-phosphoshikimate. Residue Gln171 participates in phosphoenolpyruvate binding. Asp315 acts as the Proton acceptor in catalysis. Residues Arg346 and Arg388 each coordinate phosphoenolpyruvate.

It belongs to the EPSP synthase family. In terms of assembly, monomer.

Its subcellular location is the cytoplasm. The catalysed reaction is 3-phosphoshikimate + phosphoenolpyruvate = 5-O-(1-carboxyvinyl)-3-phosphoshikimate + phosphate. It functions in the pathway metabolic intermediate biosynthesis; chorismate biosynthesis; chorismate from D-erythrose 4-phosphate and phosphoenolpyruvate: step 6/7. Catalyzes the transfer of the enolpyruvyl moiety of phosphoenolpyruvate (PEP) to the 5-hydroxyl of shikimate-3-phosphate (S3P) to produce enolpyruvyl shikimate-3-phosphate and inorganic phosphate. This is 3-phosphoshikimate 1-carboxyvinyltransferase from Streptococcus pyogenes serotype M6 (strain ATCC BAA-946 / MGAS10394).